Here is a 333-residue protein sequence, read N- to C-terminus: Taste receptor type 2 member 123 (333 aa).

At 1–14 (MFSQKTNYSHLFTF) the chain is on the extracellular side. A helical transmembrane segment spans residues 15–37 (SIIFYVEIVTGILGNGFIALVNI). Over 38–57 (MDWLKRRRISTADQILTALA) the chain is Cytoplasmic. The chain crosses the membrane as a helical span at residues 58–77 (LTRLIYVWSVLICILLLFLC). Topologically, residues 78–91 (PHLSMRPEMFTAIG) are extracellular. The chain crosses the membrane as a helical span at residues 92 to 114 (VIWVVDNHFSIWLATCLGVFYFL). At 115 to 133 (KIASFSNSLFLYLKWRVKK) the chain is on the cytoplasmic side. Residues 134-156 (VVLMIILISLIFLMLNISSLGMY) traverse the membrane as a helical segment. At 157–204 (DHFSIDVYEGNMSYNLVDSTHFPRIFLFTNSSKVFLIANSSHVFLPIN) the chain is on the extracellular side. N-linked (GlcNAc...) asparagine glycosylation is found at Asn167, Asn186, and Asn195. Residues 205–227 (SLFMLIPFTVSLVAFFVLFLSLW) form a helical membrane-spanning segment. Residues 228–250 (KHHKKMQVNAKGPRDASTMAHTK) lie on the Cytoplasmic side of the membrane. The helical transmembrane segment at 251-273 (ALQIGFSFLLLYAIYLLFIITGI) threads the bilayer. At 274 to 282 (LNLDLMRCI) the chain is on the extracellular side. The helical transmembrane segment at 283–305 (VILLFDHISGAVFSISHSFVLIL) threads the bilayer. Residues 306 to 333 (GNSKLRQATLSVLPCLRCRSKDMDTVVF) are Cytoplasmic-facing.

The protein belongs to the G-protein coupled receptor T2R family. In terms of tissue distribution, expressed in subsets of taste receptor cells of the tongue and palate epithelium and exclusively in gustducin-positive cells. Expressed in the antrum and fundus (part of the stomach), duodenum and in gastric endocrine cells.

Its subcellular location is the membrane. Functionally, gustducin-coupled receptor implicated in the perception of bitter compounds in the oral cavity and the gastrointestinal tract. Signals through PLCB2 and the calcium-regulated cation channel TRPM5. The polypeptide is Taste receptor type 2 member 123 (Tas2r123) (Rattus norvegicus (Rat)).